The sequence spans 377 residues: uncharacterized protein (377 aa).

The interval 345–377 is disordered; that stretch reads VGPSPPAYEQVARSSPTDIPLPPPSCPTNVQRD.

This is an uncharacterized protein from Schizosaccharomyces pombe (strain 972 / ATCC 24843) (Fission yeast).